The following is a 515-amino-acid chain: MKDSSNLLEMRNISKEFPGVKALDNVTLKVKKGSVHALMGENGAGKSTLMKCLFGIYHPNSGEIFISGQKVQFKNSKHALDNGVSMVHQELNQVRERNVMDNLWLGRYPKKGLFIDEKKMYDETEKIFKDLDINVNPRDKVSTLSVSQMQMVEIAKAVSYNSKIIVMDEPTSSLTEKEVSHLFKIINKLRKQGISIIYISHKMEEILEISDEVTIMRDGKWIATEKASDLTMDLIIKLMVGRELTDRFPKKDHIPKETILEVNNLSDAKNELKNVSFKLRKGEILGIAGLVGAKRTETLETLFGLREKGSGDIILHGKKVDNSKPFKAMQNGFALVTEERRQTGIFGKLPIDFNSIIANIDSYKTSTGLLANGRISKDTQWVIDSMKVKTPSQKTLIGSLSGGNQQKIVIGKWLLRKPEILLLDEPTRGIDVGAKFEIYQLINELAKEDKGIIMVSSEMPELLGVCDRILVMSNGRVSGIVNANETTQEEIMHLSAKYLSVTGGVNNANQIKEKV.

2 consecutive ABC transporter domains span residues 8–243 (LEMR…VGRE) and 254–499 (IPKE…AKYL). 40–47 (GENGAGKS) is a binding site for ATP.

It belongs to the ABC transporter superfamily. Galactose/methyl galactoside importer (TC 3.A.1.2.3) family. The complex is composed of one ATP-binding protein (MglA), two transmembrane proteins (MglC) and a solute-binding protein (MglB).

Its subcellular location is the cell membrane. The catalysed reaction is D-galactose(out) + ATP + H2O = D-galactose(in) + ADP + phosphate + H(+). It catalyses the reaction methyl beta-D-galactoside(out) + ATP + H2O = methyl beta-D-galactoside(in) + ADP + phosphate + H(+). Its function is as follows. Part of the ABC transporter complex MglABC involved in galactose/methyl galactoside import. Responsible for energy coupling to the transport system. This Clostridium perfringens (strain ATCC 13124 / DSM 756 / JCM 1290 / NCIMB 6125 / NCTC 8237 / Type A) protein is Galactose/methyl galactoside import ATP-binding protein MglA.